A 353-amino-acid polypeptide reads, in one-letter code: Type 2 DNA topoisomerase 6 subunit A (353 aa).

Positions 2–138 (NRREIAINKL…LGLMPEEDGA (137 aa)) constitute a Topo IIA-type catalytic domain. Residue tyrosine 96 is the O-(5'-phospho-DNA)-tyrosine intermediate of the active site. Mg(2+)-binding residues include glutamate 186 and aspartate 238.

The protein belongs to the TOP6A family. Homodimer. Heterotetramer of two Top6A and two Top6B chains. Mg(2+) is required as a cofactor.

It catalyses the reaction ATP-dependent breakage, passage and rejoining of double-stranded DNA.. Its function is as follows. Relaxes both positive and negative superturns and exhibits a strong decatenase activity. The polypeptide is Type 2 DNA topoisomerase 6 subunit A (Methanothermobacter thermautotrophicus (strain ATCC 29096 / DSM 1053 / JCM 10044 / NBRC 100330 / Delta H) (Methanobacterium thermoautotrophicum)).